Reading from the N-terminus, the 129-residue chain is MWKDFKEFAMKGNIIDLAVAVVIGGAFGKIVTSLVENIIMPLVGVLTGGIDLTASFVYGSGDAQIKLGVFLQSIIDFLIIAFAIFMALRIMTKLTNKKEEAVVEEPTPELDAKEELLKEIRDLLKKEQA.

The next 3 helical transmembrane spans lie at 14–34 (IIDLAVAVVIGGAFGKIVTSL), 38–58 (IIMPLVGVLTGGIDLTASFVY), and 67–87 (LGVFLQSIIDFLIIAFAIFMA).

The protein belongs to the MscL family. In terms of assembly, homopentamer.

It is found in the cell membrane. Functionally, channel that opens in response to stretch forces in the membrane lipid bilayer. May participate in the regulation of osmotic pressure changes within the cell. This is Large-conductance mechanosensitive channel from Lysinibacillus sphaericus (strain C3-41).